Here is a 237-residue protein sequence, read N- to C-terminus: Leucyl/phenylalanyl-tRNA--protein transferase (237 aa).

Belongs to the L/F-transferase family.

The protein localises to the cytoplasm. The catalysed reaction is N-terminal L-lysyl-[protein] + L-leucyl-tRNA(Leu) = N-terminal L-leucyl-L-lysyl-[protein] + tRNA(Leu) + H(+). It catalyses the reaction N-terminal L-arginyl-[protein] + L-leucyl-tRNA(Leu) = N-terminal L-leucyl-L-arginyl-[protein] + tRNA(Leu) + H(+). The enzyme catalyses L-phenylalanyl-tRNA(Phe) + an N-terminal L-alpha-aminoacyl-[protein] = an N-terminal L-phenylalanyl-L-alpha-aminoacyl-[protein] + tRNA(Phe). In terms of biological role, functions in the N-end rule pathway of protein degradation where it conjugates Leu, Phe and, less efficiently, Met from aminoacyl-tRNAs to the N-termini of proteins containing an N-terminal arginine or lysine. This is Leucyl/phenylalanyl-tRNA--protein transferase from Shewanella baltica (strain OS223).